A 480-amino-acid chain; its full sequence is MKKRIVLNAFDMTCVSHQSAGTWRHPSSQAARYNDLEYWTNMAMELERGCFDCLFIADVVGVYDVYRGSAEMALRDADQVPVNDPFGAISAMAAVTEHVGFGVTAAITFEQPYLLARRLSTLDHLTKGRVAWNVVSSYLNSAALNIGMDQQLAHDERYEMADEYMEVMYKLWEGSWEDDAVKRDKKSGVFTDGSKVHPINHQGKYYKVPGFHICEPSPQRTPVIFQAGASGRGSKFAASNAEGMFILTTSVEQARQITTDIRNQAEAAGRSRDSIKIFMLLTVITGDSDEAAEAKYQEYLSYANPEGMLALYGGWTGIDFAKLDPDEPLQAMENDSLRTTLESLTHGENAKKWTVRDVIRERCIGGLGPVLVGGPQKVADELERWVDEGGVDGFNLAYAVTPGSVTDFIDYIVPELRKRGRAQDSYKPGSLRRKLIGTNDGRVESTHPAAQYRDAYVGKESVADRTQPSPFANAKAPVAE.

FMN contacts are provided by Asp-58, Thr-104, His-154, Tyr-158, and Ser-230. A disordered region spans residues 423-480 (QDSYKPGSLRRKLIGTNDGRVESTHPAAQYRDAYVGKESVADRTQPSPFANAKAPVAE).

The protein belongs to the NtaA/SnaA/DszA monooxygenase family. Heterodimer of 2 subunits, DmoA and DmoB. The cofactor is FMN.

It carries out the reaction dimethyl sulfide + NADH + O2 + H(+) = methanethiol + formaldehyde + NAD(+) + H2O. Its activity is regulated as follows. Inhibited by umbelliferone, 8-anilinonaphthalenesulfonate, a range of metal-chelating agents, and Hg(2+), Cd(2+) and Pb(2+) ions. Its function is as follows. Monooxygenase that mediates oxidation of dimethyl sulfide, the first step in dimethyl sulfide degradation pathway. Has much lower activity with diethyl sulfide and other short-chain alkyl methyl sulfides. This Hyphomicrobium sulfonivorans protein is Dimethyl-sulfide monooxygenase (dmoA).